Here is a 368-residue protein sequence, read N- to C-terminus: Phosphate acyltransferase (368 aa).

The tract at residues 334-368 is disordered; the sequence is EGSLEQAARDASGAGHASPIAGQPAEPYAAQSSKA.

Belongs to the PlsX family. Homodimer. Probably interacts with PlsY.

It localises to the cytoplasm. The catalysed reaction is a fatty acyl-[ACP] + phosphate = an acyl phosphate + holo-[ACP]. The protein operates within lipid metabolism; phospholipid metabolism. Functionally, catalyzes the reversible formation of acyl-phosphate (acyl-PO(4)) from acyl-[acyl-carrier-protein] (acyl-ACP). This enzyme utilizes acyl-ACP as fatty acyl donor, but not acyl-CoA. This is Phosphate acyltransferase from Paraburkholderia xenovorans (strain LB400).